A 120-amino-acid polypeptide reads, in one-letter code: MTECDWEKKSTSASNSDTEMKPELPPCVNPGNPVFSCMLDPKTLHTTTSLSKPKMIMYKTNSSNYGEFLPMPQFFPCYYTPREQVFSSHIRATGFYQNNTLNTAPDRTRTLDFPNFQHTL.

A compositionally biased stretch (basic and acidic residues) spans methionine 1 to serine 10. Residues methionine 1–proline 25 are disordered.

Belongs to the PIERCE2 family. In terms of assembly, microtubule inner protein component of sperm flagellar doublet microtubules. Interacts with CFAP53, ODAD1 and ODAD3; the interactions link the outer dynein arms docking complex (ODA-DC) to the internal microtubule inner proteins (MIP) in cilium axoneme. Expressed in trachea multiciliated cells.

It localises to the cytoplasm. Its subcellular location is the cytoskeleton. The protein localises to the cilium axoneme. It is found in the flagellum axoneme. Its function is as follows. Microtubule inner protein involved in the attachment of outer dynein arms (ODAs) to dynein-decorated doublet microtubules (DMTs) in cilia axoneme, which is required for motile cilia beating. This Bos taurus (Bovine) protein is Piercer of microtubule wall 2 protein (PIERCE2).